A 338-amino-acid chain; its full sequence is Mitoferrin-1 (338 aa).

Residues 1–37 are disordered; that stretch reads MELRRGGVGSQAAGRRMDGDCRDGGCGSKDAGSEDYE. Solcar repeat units follow at residues 43–131, 141–225, and 232–326; these read ASVS…MKRT, NSHL…LQEQ, and YNPQ…FKYF. 6 helical membrane-spanning segments follow: residues 45 to 64, 106 to 125, 143 to 162, 200 to 219, 234 to 253, and 301 to 320; these read VSTHMTAGAMAGILEHSIMY, GLNVMMMGAGPAHAMYFACY, HLANGIAGSMATLLHDAVMN, SYTTQLTMNIPFQSIHFITY, PQSHIISGGLAGALAAAATT, and GIQARVIYQMPSTAISWSVY.

It belongs to the mitochondrial carrier (TC 2.A.29) family. As to quaternary structure, interacts with ACB10; this interaction stabilizes SLC25A37 and enhances the function of SLC25A37 to import mitochondrial iron during erythroid differentiation.

It localises to the mitochondrion inner membrane. The catalysed reaction is Fe(2+)(in) = Fe(2+)(out). Its function is as follows. Mitochondrial iron transporter that specifically mediates iron uptake in developing erythroid cells, thereby playing an essential role in heme biosynthesis. This Rattus norvegicus (Rat) protein is Mitoferrin-1 (Slc25a37).